The chain runs to 336 residues: Holliday junction branch migration complex subunit RuvB (336 aa).

The large ATPase domain (RuvB-L) stretch occupies residues 4–185; that stretch reads MDERLLSGES…FGVLSRLEYY (182 aa). Residues L24, R25, G66, K69, T70, T71, 132–134, R175, Y185, and R222 contribute to the ATP site; that span reads EDF. T70 serves as a coordination point for Mg(2+). Residues 186-256 form a small ATPAse domain (RuvB-S) region; sequence TVDQLSAIVE…ITQMALELLQ (71 aa). The head domain (RuvB-H) stretch occupies residues 259 to 336; the sequence is KLGLDHIDHK…EHFGMEMPKV (78 aa). The DNA site is built by R314 and R319.

This sequence belongs to the RuvB family. As to quaternary structure, homohexamer. Forms an RuvA(8)-RuvB(12)-Holliday junction (HJ) complex. HJ DNA is sandwiched between 2 RuvA tetramers; dsDNA enters through RuvA and exits via RuvB. An RuvB hexamer assembles on each DNA strand where it exits the tetramer. Each RuvB hexamer is contacted by two RuvA subunits (via domain III) on 2 adjacent RuvB subunits; this complex drives branch migration. In the full resolvosome a probable DNA-RuvA(4)-RuvB(12)-RuvC(2) complex forms which resolves the HJ.

The protein localises to the cytoplasm. It catalyses the reaction ATP + H2O = ADP + phosphate + H(+). Functionally, the RuvA-RuvB-RuvC complex processes Holliday junction (HJ) DNA during genetic recombination and DNA repair, while the RuvA-RuvB complex plays an important role in the rescue of blocked DNA replication forks via replication fork reversal (RFR). RuvA specifically binds to HJ cruciform DNA, conferring on it an open structure. The RuvB hexamer acts as an ATP-dependent pump, pulling dsDNA into and through the RuvAB complex. RuvB forms 2 homohexamers on either side of HJ DNA bound by 1 or 2 RuvA tetramers; 4 subunits per hexamer contact DNA at a time. Coordinated motions by a converter formed by DNA-disengaged RuvB subunits stimulates ATP hydrolysis and nucleotide exchange. Immobilization of the converter enables RuvB to convert the ATP-contained energy into a lever motion, pulling 2 nucleotides of DNA out of the RuvA tetramer per ATP hydrolyzed, thus driving DNA branch migration. The RuvB motors rotate together with the DNA substrate, which together with the progressing nucleotide cycle form the mechanistic basis for DNA recombination by continuous HJ branch migration. Branch migration allows RuvC to scan DNA until it finds its consensus sequence, where it cleaves and resolves cruciform DNA. This chain is Holliday junction branch migration complex subunit RuvB, found in Bacillus cereus (strain ZK / E33L).